The sequence spans 314 residues: Very long chain fatty acid elongase 4 (314 aa).

Residue Asn20 is glycosylated (N-linked (GlcNAc...) asparagine). 7 consecutive transmembrane segments (helical) span residues 42 to 62 (LMQSPWPTLSISTLYLLFVWL), 78 to 98 (VLIIYNFGMVLLNLFIFRELF), 127 to 147 (ALWWYFVSKGVEYLDTVFFIL), 165 to 185 (MFTLWWIGIKWVAGGQAFFGA), 188 to 208 (NSFIHVIMYSYYGLTAFGPWI), 217 to 237 (YLTMLQLIQFHVTIGHTALSL), and 247 to 267 (MHWALIAYAISFIFLFLNFYI). Residues 275 to 314 (KPKAGKTAMNGISANGVSKSEKQLMIENGKKQKNGKAKGD) are disordered. Residues 293–304 (KSEKQLMIENGK) show a composition bias toward basic and acidic residues. Positions 305-314 (KQKNGKAKGD) are enriched in basic residues. The Di-lysine motif signature appears at 310–314 (KAKGD).

This sequence belongs to the ELO family. ELOVL4 subfamily. As to quaternary structure, oligomer. Post-translationally, N-glycosylated. In terms of tissue distribution, expressed in the retina and at much lower level in the brain. Ubiquitous, highest expression in thymus, followed by testis, small intestine, ovary, and prostate. Little or no expression in heart, lung, liver, or leukocates.

The protein localises to the endoplasmic reticulum membrane. The enzyme catalyses a very-long-chain acyl-CoA + malonyl-CoA + H(+) = a very-long-chain 3-oxoacyl-CoA + CO2 + CoA. It carries out the reaction tetracosanoyl-CoA + malonyl-CoA + H(+) = 3-oxohexacosanoyl-CoA + CO2 + CoA. The catalysed reaction is hexacosanoyl-CoA + malonyl-CoA + H(+) = 3-oxooctacosanyol-CoA + CO2 + CoA. It catalyses the reaction octacosanoyl-CoA + malonyl-CoA + H(+) = 3-oxo-triacontanoyl-CoA + CO2 + CoA. The enzyme catalyses triacontanoyl-CoA + malonyl-CoA + H(+) = 3-oxo-dotriacontanoyl-CoA + CO2 + CoA. It carries out the reaction (19Z,22Z,25Z,28Z,31Z)-tetratriacontapentaenoyl-CoA + malonyl-CoA + H(+) = 3-oxo-(21Z,24Z,27Z,30Z,33Z)-hexatriacontapentaenoyl-CoA + CO2 + CoA. The catalysed reaction is (4Z,7Z,10Z,13Z,16Z,19Z)-docosahexaenoyl-CoA + malonyl-CoA + H(+) = 3-oxo-(6Z,9Z,12Z,15Z,18Z,21Z)-tetracosahexaenoyl-CoA + CO2 + CoA. It catalyses the reaction (7Z,10Z,13Z,16Z)-docosatetraenoyl-CoA + malonyl-CoA + H(+) = (9Z,12Z,15Z,18Z)-3-oxotetracosatetraenoyl-CoA + CO2 + CoA. The enzyme catalyses (11Z,14Z,17Z,20Z,23Z)-hexacosapentaenoyl-CoA + malonyl-CoA + H(+) = 3-oxo-(13Z,16Z,19Z,22Z,25Z)-octacosapentaenoyl-CoA + CO2 + CoA. It carries out the reaction (13Z,16Z,19Z,22Z,25Z)-octacosapentaenoyl-CoA + malonyl-CoA + H(+) = 3-oxo-(15Z,18Z,21Z,24Z,27Z)-triacontapentaenoyl-CoA + CO2 + CoA. The catalysed reaction is (15Z,18Z,21Z,24Z,27Z)-triacontapentaenoyl-CoA + malonyl-CoA + H(+) = 3-oxo-(17Z,20Z,23Z,26Z,29Z)-dotriacontapentaenoyl-CoA + CO2 + CoA. It catalyses the reaction (17Z,20Z,23Z,26Z,29Z)-dotriacontapentaenoyl-CoA + malonyl-CoA + H(+) = 3-oxo-(19Z,22Z,25Z,28Z,31Z)-tetratriacontapentaenoyl-CoA + CO2 + CoA. The enzyme catalyses (21Z,24Z,27Z,30Z,33Z)-hexatriacontapentaenoyl-CoA + malonyl-CoA + H(+) = 3-oxo-(23Z,26Z,29Z,32Z,35Z)-octatriacontapentaenoyl-CoA + CO2 + CoA. It carries out the reaction (11Z,14Z,17Z,20Z)-hexacosatetraenoyl-CoA + malonyl-CoA + H(+) = (13Z,16Z,19Z,22Z)-3-oxooctacosatetraenoyl-CoA + CO2 + CoA. The catalysed reaction is (13Z,16Z,19Z,22Z)-octacosatetraenoyl-CoA + malonyl-CoA + H(+) = 3-oxo-(15Z,18Z,21Z,24Z)-triacontatetraenoyl-CoA + CO2 + CoA. It catalyses the reaction (15Z,18Z,21Z,24Z)-triacontatetraenoyl-CoA + malonyl-CoA + H(+) = 3-oxo-(17Z,20Z,23Z,26Z)-dotriacontatetraenoyl-CoA + CO2 + CoA. The enzyme catalyses (17Z,20Z,23Z,26Z)-dotriacontatetraenoyl-CoA + malonyl-CoA + H(+) = 3-oxo-(19Z,22Z,25Z,28Z)-tetratriacontatetraenoyl-CoA + CO2 + CoA. It carries out the reaction (19Z,22Z,25Z,28Z)-tetratriacontatetraenoyl-CoA + malonyl-CoA + H(+) = 3-oxo-(21Z,24Z,27Z,30Z)-hexatriacontatetraenoyl-CoA + CO2 + CoA. The catalysed reaction is (21Z,24Z,27Z,30Z)-hexatriacontatetraenoyl-CoA + malonyl-CoA + H(+) = 3-oxo-(23Z,26Z,29Z,32Z)-octatriacontatetraenoyl-CoA + CO2 + CoA. It catalyses the reaction (6Z,9Z,12Z,15Z,18Z,21Z)-tetracosahexaenoyl-CoA + malonyl-CoA + H(+) = 3-oxo-(8Z,11Z,14Z,17Z,20Z,23Z)-hexacosahexaenoyl-CoA + CO2 + CoA. The enzyme catalyses (8Z,11Z,14Z,17Z,20Z,23Z)-hexacosahexaenoyl-CoA + malonyl-CoA + H(+) = 3-oxo-(10Z,13Z,16Z,19Z,22Z,25Z)-octacosahexaenoyl-CoA + CO2 + CoA. It carries out the reaction (10Z,13Z,16Z,19Z,22Z,25Z)-octacosahexaenoyl-CoA + malonyl-CoA + H(+) = 3-oxo-(12Z,15Z,18Z,21Z,24Z,27Z)-triacontahexaenoyl-CoA + CO2 + CoA. The catalysed reaction is (12Z,15Z,18Z,21Z,24Z,27Z)-triacontahexaenoyl-CoA + malonyl-CoA + H(+) = 3-oxo-(14Z,17Z,20Z,23Z,26Z,29Z)-dotriacontahexaenoyl-CoA + CO2 + CoA. It catalyses the reaction (14Z,17Z,20Z,23Z,26Z,29Z)-dotriacontahexaenoyl-CoA + malonyl-CoA + H(+) = 3-oxo-(16Z,19Z,22Z,25Z,28Z,31Z)-tetratriacontahexaenoyl-CoA + CO2 + CoA. The enzyme catalyses (16Z,19Z,22Z,25Z,28Z,31Z)-tetratriacontahexaenoyl-CoA + malonyl-CoA + H(+) = 3-oxo-(18Z,21Z,24Z,27Z,30Z,33Z)-hexatriacontahexaenoyl-CoA + CO2 + CoA. It carries out the reaction (9Z,12Z,15Z,18Z,21Z)-tetracosapentaenoyl-CoA + malonyl-CoA + H(+) = 3-oxo-(11Z,14Z,17Z,20Z,23Z)-hexacosapentaenoyl-CoA + CO2 + CoA. It participates in lipid metabolism; fatty acid biosynthesis. Catalyzes the first and rate-limiting reaction of the four reactions that constitute the long-chain fatty acids elongation cycle. This endoplasmic reticulum-bound enzymatic process allows the addition of 2 carbons to the chain of long- and very long-chain fatty acids (VLCFAs) per cycle. Condensing enzyme that catalyzes the synthesis of very long chain saturated (VLC-SFA) and polyunsaturated (PUFA) fatty acids that are involved in multiple biological processes as precursors of membrane lipids and lipid mediators. May play a critical role in early brain and skin development. The polypeptide is Very long chain fatty acid elongase 4 (Homo sapiens (Human)).